The chain runs to 1120 residues: Probable leucine-rich repeat receptor-like protein kinase At1g35710 (1120 aa).

Residues Met-1 to Ala-29 form the signal peptide. Residues Thr-30 to Gly-783 lie on the Extracellular side of the membrane. N-linked (GlcNAc...) asparagine glycans are attached at residues Asn-46, Asn-60, Asn-83, and Asn-124. 27 LRR repeats span residues Ser-78–Ser-100, Asn-103–Leu-125, Lys-127–Lys-150, Asn-151–Asn-172, Ser-175–Lys-198, Asn-199–Met-221, Ser-223–Lys-246, Asn-247–Met-269, Ser-271–Lys-294, Asn-295–Ile-317, Ser-319–Lys-342, Asn-343–Met-365, Ser-367–Leu-389, Asn-391–Asn-412, Ser-415–Phe-437, Lys-439–Ser-461, His-463–Lys-484, Lys-487–Lys-510, Asp-535–Ser-557, Lys-559–Met-581, Gln-583–Leu-605, Asn-607–Thr-630, Asn-631–Ser-652, Lys-655–Thr-677, Gln-678–Gln-701, Ser-702–Gly-723, and Ala-726–Arg-748. Asn-151 is a glycosylation site (N-linked (GlcNAc...) asparagine). N-linked (GlcNAc...) asparagine glycosylation is present at Asn-295. N-linked (GlcNAc...) asparagine glycosylation is present at Asn-343. Asn-391, Asn-436, Asn-460, Asn-473, and Asn-490 each carry an N-linked (GlcNAc...) asparagine glycan. N-linked (GlcNAc...) asparagine glycans are attached at residues Asn-569, Asn-580, Asn-604, Asn-607, Asn-641, and Asn-660. Asn-712 is a glycosylation site (N-linked (GlcNAc...) asparagine). Residues Asn-784–Ala-804 traverse the membrane as a helical segment. The Cytoplasmic segment spans residues Asn-805–Ser-1120. Position 848 is a phosphothreonine (Thr-848). The Protein kinase domain maps to Phe-851–Ser-1120. Residues Ile-857–Val-865 and Lys-878 contribute to the ATP site. 2 positions are modified to phosphotyrosine: Tyr-929 and Tyr-968. Asp-981 functions as the Proton acceptor in the catalytic mechanism. A Phosphoserine modification is found at Ser-1014. Residues Tyr-1022 and Tyr-1029 each carry the phosphotyrosine modification. A Phosphothreonine modification is found at Thr-1030.

This sequence belongs to the protein kinase superfamily. Ser/Thr protein kinase family.

The protein resides in the membrane. It catalyses the reaction L-seryl-[protein] + ATP = O-phospho-L-seryl-[protein] + ADP + H(+). It carries out the reaction L-threonyl-[protein] + ATP = O-phospho-L-threonyl-[protein] + ADP + H(+). This Arabidopsis thaliana (Mouse-ear cress) protein is Probable leucine-rich repeat receptor-like protein kinase At1g35710.